Here is a 416-residue protein sequence, read N- to C-terminus: Serine hydroxymethyltransferase (416 aa).

(6S)-5,6,7,8-tetrahydrofolate is bound by residues leucine 121 and 125 to 127 (GHL). Lysine 230 is modified (N6-(pyridoxal phosphate)lysine).

This sequence belongs to the SHMT family. As to quaternary structure, homodimer. Pyridoxal 5'-phosphate is required as a cofactor.

It is found in the cytoplasm. The catalysed reaction is (6R)-5,10-methylene-5,6,7,8-tetrahydrofolate + glycine + H2O = (6S)-5,6,7,8-tetrahydrofolate + L-serine. The protein operates within one-carbon metabolism; tetrahydrofolate interconversion. Its pathway is amino-acid biosynthesis; glycine biosynthesis; glycine from L-serine: step 1/1. Catalyzes the reversible interconversion of serine and glycine with tetrahydrofolate (THF) serving as the one-carbon carrier. This reaction serves as the major source of one-carbon groups required for the biosynthesis of purines, thymidylate, methionine, and other important biomolecules. Also exhibits THF-independent aldolase activity toward beta-hydroxyamino acids, producing glycine and aldehydes, via a retro-aldol mechanism. In Nitrosospira multiformis (strain ATCC 25196 / NCIMB 11849 / C 71), this protein is Serine hydroxymethyltransferase.